Consider the following 263-residue polypeptide: Flagellar brake protein YcgR (263 aa).

The disordered stretch occupies residues 1-21 (MAELSTPSPASPAPLDGGRGD). In terms of domain architecture, PilZ spans 133–250 (QRREFYRLQV…DTRIQRYIFK (118 aa)).

The protein belongs to the YcgR family. Monomer. Interacts with the flagellar basal bodies.

It localises to the bacterial flagellum basal body. Acts as a flagellar brake, regulating swimming and swarming in a bis-(3'-5') cyclic diguanylic acid (c-di-GMP)-dependent manner. Binds 1 c-di-GMP dimer per subunit. Increasing levels of c-di-GMP lead to decreased motility. The polypeptide is Flagellar brake protein YcgR (Thauera aminoaromatica).